We begin with the raw amino-acid sequence, 567 residues long: Potassium-transporting ATPase potassium-binding subunit (567 aa).

A run of 11 helical transmembrane segments spans residues 5-25 (GWIQILVFCGIIGLLTKPLGF), 64-84 (TAYAVALLLFNLAGFLVLYAL), 136-156 (GLTVQNFVSAATGIAIAIALI), 179-199 (LYVLLPLCIVLTLVYVWLGIP), 254-274 (ISNLIQMVTIFALGAALTNVF), 285-305 (WAILASMGALFIAGVAVCYWA), 330-350 (FGIALSALFAVITTAASCGAV), 357-376 (FTALGGMIPLINMQLGEVIV), 421-441 (MLAILCLPLAMLIFTAIAVVL), 486-506 (ITIGIGMLMGRFLVIIPALAI), and 529-549 (LFVGLLIGVIVIVGGLTFFPA).

The protein belongs to the KdpA family. The system is composed of three essential subunits: KdpA, KdpB and KdpC.

Its subcellular location is the cell inner membrane. Functionally, part of the high-affinity ATP-driven potassium transport (or Kdp) system, which catalyzes the hydrolysis of ATP coupled with the electrogenic transport of potassium into the cytoplasm. This subunit binds the periplasmic potassium ions and delivers the ions to the membrane domain of KdpB through an intramembrane tunnel. The sequence is that of Potassium-transporting ATPase potassium-binding subunit from Mesorhizobium japonicum (strain LMG 29417 / CECT 9101 / MAFF 303099) (Mesorhizobium loti (strain MAFF 303099)).